The primary structure comprises 388 residues: UDP-galactose transporter senju (388 aa).

Transmembrane regions (helical) follow at residues 13-33 (LTFV…IFVT), 46-66 (TVTV…CLYC), 84-104 (VLGL…LAFV), 113-133 (TYYL…QIIF), 142-162 (WISL…FGSF), 202-222 (FSLS…AGVY), 236-256 (IFVQ…VILL), 276-296 (FSVL…SFFL), 309-329 (ALEL…PIYM), and 331-351 (TALA…SPVV).

The protein belongs to the nucleotide-sugar transporter family.

It localises to the golgi apparatus membrane. UDP-galactose transporter involved in the synthesis of galactose-containing glycans. Plays a role in quiescence of the innate immune response, possibly by regulating glycosylation of the Toll pathway ligand spz. The chain is UDP-galactose transporter senju from Drosophila melanogaster (Fruit fly).